The sequence spans 115 residues: Cell division protein FtsL (115 aa).

Topologically, residues 1–25 (MNTATRVIVAQNVRTRNRTFQITKQ) are cytoplasmic. Residues 26 to 46 (GVVIVALVIALLCSAFGVVYF) traverse the membrane as a helical segment. The Periplasmic segment spans residues 47–115 (KDLNRRLFIQ…ILVNADAMIE (69 aa)).

Belongs to the FtsL family. As to quaternary structure, part of a complex composed of FtsB, FtsL and FtsQ.

The protein resides in the cell inner membrane. Functionally, essential cell division protein. May link together the upstream cell division proteins, which are predominantly cytoplasmic, with the downstream cell division proteins, which are predominantly periplasmic. The protein is Cell division protein FtsL of Coxiella burnetii (strain RSA 493 / Nine Mile phase I).